Reading from the N-terminus, the 767-residue chain is Cation/H(+) antiporter 27 (767 aa).

The next 11 membrane-spanning stretches (helical) occupy residues 39-59, 63-83, 99-119, 135-155, 173-193, 205-225, 242-262, 280-300, 323-343, 371-391, and 415-435; these read LPLL…FQFL, FGKF…PSVI, VYII…ITTC, INGI…AILI, HVAI…LSSL, LASM…NIAI, VLQM…MLWM, ICVL…PYFF, IGCF…GLNI, IALP…VGFI, and KSFG…IVIV.

It belongs to the monovalent cation:proton antiporter 2 (CPA2) transporter (TC 2.A.37) family. CHX (TC 2.A.37.4) subfamily. In terms of tissue distribution, specifically expressed in pollen.

The protein resides in the membrane. Its function is as follows. May operate as a cation/H(+) antiporter. This chain is Cation/H(+) antiporter 27 (CHX27), found in Arabidopsis thaliana (Mouse-ear cress).